We begin with the raw amino-acid sequence, 196 residues long: MNEAVSPGALSTLFTDARTHNGWRETPVSDETLRELYALMKWGPTSANCSPARIVFIRTVEGKERLRPALSSGNLQKTLTAPVTAIVAWDSEFYERLPLLFPHGDARSWFTSSPQLAEETAFRNSSMQAAYLIVACRALGLDTGPMSGFDRQYVDDAFFAGSTLKSNLLINIGYGDSSKLYARLPRLSFEEACGLL.

This sequence belongs to the nitroreductase family. HadB/RutE subfamily. FMN serves as cofactor.

It catalyses the reaction 3-hydroxypropanoate + NADP(+) = 3-oxopropanoate + NADPH + H(+). In terms of biological role, may reduce toxic product malonic semialdehyde to 3-hydroxypropionic acid, which is excreted. This Escherichia coli O139:H28 (strain E24377A / ETEC) protein is Probable malonic semialdehyde reductase RutE.